A 428-amino-acid polypeptide reads, in one-letter code: MMGKLPLGVVSPYVKMSSGGCTDPLKFYATSYCTAYGREDFKPRVGSHRGTGYKSNYRPVVFYQPHLDALDNTATGEQGCNNFQTVTSQSYRPLEVPDGTHPLPWNLHQTNSGYSREKASAVTPIKEVRKVHFDTQDYGPQAITGLEPKDAPLLHQQQNKGSLEWENAGHGPRFMTSEYNSKYLKEPSHQPDLLQKNSVGAKEETGFTEESNKNPIVFQPPSQALPGDPVLLPGRSVTKSDFLPISHPHGDEFLPVLARGSERETGFSRVNERTLNPRVPPPCPEPSSMNHWQFQSPQRMQQTNVALLGRETVGNKEPSGFSLNNPSYVRSPYDPDMDNRYLTTYNQGYFENIPKGLDREGWTRGGLQPQKPGGYALNQPVTRLEATPTPTESLRRLHPHLGRTLISVDPFYRTAPPSGHVSRFTAPN.

The tract at residues alanine 201 to leucine 231 is disordered.

As to quaternary structure, microtubule inner protein component of sperm flagellar doublet microtubules. Interacts with PPP1CA.

It is found in the cell projection. The protein resides in the cilium. It localises to the cytoplasm. The protein localises to the cytoskeleton. Its subcellular location is the flagellum axoneme. The sequence is that of Stabilizer of axonemal microtubules 4 from Bos taurus (Bovine).